The chain runs to 339 residues: Ketol-acid reductoisomerase (NADP(+)) (339 aa).

One can recognise a KARI N-terminal Rossmann domain in the interval 1–182 (MKVYYDSDAD…GGGRSGVIET (182 aa)). NADP(+) is bound by residues 24–27 (YGSQ), Arg-48, Ser-51, Ser-53, and 83–86 (DEHQ). Residue His-108 is part of the active site. NADP(+) is bound at residue Gly-134. The 146-residue stretch at 183-328 (TFREEVETDL…ARLRKMMPWI (146 aa)) folds into the KARI C-terminal knotted domain. Mg(2+)-binding residues include Asp-191, Glu-195, Glu-227, and Glu-231. Residue Ser-252 coordinates substrate.

It belongs to the ketol-acid reductoisomerase family. It depends on Mg(2+) as a cofactor.

The enzyme catalyses (2R)-2,3-dihydroxy-3-methylbutanoate + NADP(+) = (2S)-2-acetolactate + NADPH + H(+). It carries out the reaction (2R,3R)-2,3-dihydroxy-3-methylpentanoate + NADP(+) = (S)-2-ethyl-2-hydroxy-3-oxobutanoate + NADPH + H(+). It participates in amino-acid biosynthesis; L-isoleucine biosynthesis; L-isoleucine from 2-oxobutanoate: step 2/4. It functions in the pathway amino-acid biosynthesis; L-valine biosynthesis; L-valine from pyruvate: step 2/4. Its function is as follows. Involved in the biosynthesis of branched-chain amino acids (BCAA). Catalyzes an alkyl-migration followed by a ketol-acid reduction of (S)-2-acetolactate (S2AL) to yield (R)-2,3-dihydroxy-isovalerate. In the isomerase reaction, S2AL is rearranged via a Mg-dependent methyl migration to produce 3-hydroxy-3-methyl-2-ketobutyrate (HMKB). In the reductase reaction, this 2-ketoacid undergoes a metal-dependent reduction by NADPH to yield (R)-2,3-dihydroxy-isovalerate. This is Ketol-acid reductoisomerase (NADP(+)) from Zymomonas mobilis subsp. mobilis (strain ATCC 31821 / ZM4 / CP4).